The primary structure comprises 154 residues: Crossover junction endodeoxyribonuclease RuvC (154 aa).

Catalysis depends on residues aspartate 7, glutamate 67, and aspartate 139. Aspartate 7, glutamate 67, and aspartate 139 together coordinate Mg(2+).

The protein belongs to the RuvC family. In terms of assembly, homodimer which binds Holliday junction (HJ) DNA. The HJ becomes 2-fold symmetrical on binding to RuvC with unstacked arms; it has a different conformation from HJ DNA in complex with RuvA. In the full resolvosome a probable DNA-RuvA(4)-RuvB(12)-RuvC(2) complex forms which resolves the HJ. Mg(2+) is required as a cofactor.

Its subcellular location is the cytoplasm. The catalysed reaction is Endonucleolytic cleavage at a junction such as a reciprocal single-stranded crossover between two homologous DNA duplexes (Holliday junction).. The RuvA-RuvB-RuvC complex processes Holliday junction (HJ) DNA during genetic recombination and DNA repair. Endonuclease that resolves HJ intermediates. Cleaves cruciform DNA by making single-stranded nicks across the HJ at symmetrical positions within the homologous arms, yielding a 5'-phosphate and a 3'-hydroxyl group; requires a central core of homology in the junction. The consensus cleavage sequence is 5'-(A/T)TT(C/G)-3'. Cleavage occurs on the 3'-side of the TT dinucleotide at the point of strand exchange. HJ branch migration catalyzed by RuvA-RuvB allows RuvC to scan DNA until it finds its consensus sequence, where it cleaves and resolves the cruciform DNA. The protein is Crossover junction endodeoxyribonuclease RuvC of Prochlorococcus marinus (strain MIT 9313).